The sequence spans 47 residues: Delta-actitoxin-Aspp1b (47 aa).

Disulfide bonds link cysteine 4–cysteine 44, cysteine 6–cysteine 34, and cysteine 27–cysteine 45.

Belongs to the sea anemone sodium channel inhibitory toxin family. Type I subfamily.

The protein localises to the secreted. It is found in the nematocyst. Its function is as follows. Binds specifically to voltage-gated sodium channels (Nav), thereby delaying their inactivation during signal transduction. Has a longer mammalian heart stimulation effect than Hk2a, Hk8a and Hk16a. This Anthopleura sp. (strain 'Zhanjiang') (Sea anemone) protein is Delta-actitoxin-Aspp1b.